Here is a 103-residue protein sequence, read N- to C-terminus: NADH-quinone oxidoreductase subunit K 1 (103 aa).

3 helical membrane-spanning segments follow: residues 6–26 (LGHF…GIFL), 32–52 (IIIL…LVAF), and 67–87 (LVLT…VVFF).

This sequence belongs to the complex I subunit 4L family. As to quaternary structure, NDH-1 is composed of 14 different subunits. Subunits NuoA, H, J, K, L, M, N constitute the membrane sector of the complex.

The protein resides in the cell inner membrane. The enzyme catalyses a quinone + NADH + 5 H(+)(in) = a quinol + NAD(+) + 4 H(+)(out). In terms of biological role, NDH-1 shuttles electrons from NADH, via FMN and iron-sulfur (Fe-S) centers, to quinones in the respiratory chain. The immediate electron acceptor for the enzyme in this species is believed to be ubiquinone. Couples the redox reaction to proton translocation (for every two electrons transferred, four hydrogen ions are translocated across the cytoplasmic membrane), and thus conserves the redox energy in a proton gradient. The polypeptide is NADH-quinone oxidoreductase subunit K 1 (Rhodopseudomonas palustris (strain ATCC BAA-98 / CGA009)).